A 521-amino-acid chain; its full sequence is MKKLRCDQTPAWAALNTHFNASGRHFDVREAFARDARRFEAFSQDAPHVFADLSKNLIDADSQALLLALARQCGLEQQRDAMFAGELINSTEQRAVMHFLLRNPPSAQYTPAQAAINKIADAQAEVEVTLNAMLAYAEQVRADAAITDIVNIGIGGSDLGPQMAVLALNEFATAGKRLHFVSNIDGDELAGVLGLVKPENTLFLVASKTFTTTETMTNARSAKAWFEARGGQDIARHFAALTTNVAAANEFGITTTFGFWDWVGGRYSLWSAIGLPLAIAIGAAGFREFLAGAHAMDEHFRTAALEDNLPVRLGLLDVWYRNFHGFSSRSIAPYSSALRRWPAYLQQLEMESNGKRVDKDGQPLPFDTSPVLWGEPGTNGQHAYFQMLHQGTAVVPVEFVAVKRAAHGLPGHHDKLLANVLAQAQALMRGKKDAGGHQDFPGNRPSTFLLLEQLTPASLGALIALQEHRVFVSGAIWGINSFDQWGVELGKVLARDIEPRLQSGDISGLDGSTAGLLQRLR.

Residue glutamate 351 is the Proton donor of the active site. Catalysis depends on residues histidine 382 and lysine 491.

The protein belongs to the GPI family.

It is found in the cytoplasm. It catalyses the reaction alpha-D-glucose 6-phosphate = beta-D-fructose 6-phosphate. Its pathway is carbohydrate biosynthesis; gluconeogenesis. It functions in the pathway carbohydrate degradation; glycolysis; D-glyceraldehyde 3-phosphate and glycerone phosphate from D-glucose: step 2/4. Functionally, catalyzes the reversible isomerization of glucose-6-phosphate to fructose-6-phosphate. The protein is Glucose-6-phosphate isomerase of Polaromonas naphthalenivorans (strain CJ2).